The chain runs to 512 residues: AMP phosphorylase (512 aa).

Residues glycine 166, 192–197 (SRAITG), and threonine 201 contribute to the AMP site. Catalysis depends on aspartate 254, which acts as the Proton donor. Serine 262 and lysine 286 together coordinate AMP.

The protein belongs to the thymidine/pyrimidine-nucleoside phosphorylase family. Type 2 subfamily.

The enzyme catalyses AMP + phosphate = alpha-D-ribose 1,5-bisphosphate + adenine. The catalysed reaction is CMP + phosphate = cytosine + alpha-D-ribose 1,5-bisphosphate. It carries out the reaction UMP + phosphate = alpha-D-ribose 1,5-bisphosphate + uracil. Its function is as follows. Catalyzes the conversion of AMP and phosphate to adenine and ribose 1,5-bisphosphate (R15P). Exhibits phosphorylase activity toward CMP and UMP in addition to AMP. Functions in an archaeal AMP degradation pathway, together with R15P isomerase and RubisCO. The chain is AMP phosphorylase from Methanothrix thermoacetophila (strain DSM 6194 / JCM 14653 / NBRC 101360 / PT) (Methanosaeta thermophila).